Here is a 286-residue protein sequence, read N- to C-terminus: Pyridoxal kinase PdxY (286 aa).

Substrate-binding positions include Ser9 and 44-45 (TQ). Residues Asp111, Ala143, Glu148, Lys181, and 208–211 (RPLV) each bind ATP. Residue Asp223 coordinates substrate.

It belongs to the pyridoxine kinase family. PdxY subfamily. In terms of assembly, homodimer. It depends on Mg(2+) as a cofactor.

It catalyses the reaction pyridoxal + ATP = pyridoxal 5'-phosphate + ADP + H(+). It functions in the pathway cofactor metabolism; pyridoxal 5'-phosphate salvage; pyridoxal 5'-phosphate from pyridoxal: step 1/1. Pyridoxal kinase involved in the salvage pathway of pyridoxal 5'-phosphate (PLP). Catalyzes the phosphorylation of pyridoxal to PLP. In Yersinia pestis bv. Antiqua (strain Antiqua), this protein is Pyridoxal kinase PdxY.